Here is a 167-residue protein sequence, read N- to C-terminus: Ribosome maturation factor RimM (167 aa).

One can recognise a PRC barrel domain in the interval 94 to 165 (ENEFYYSDII…KIIITPMEGL (72 aa)).

Belongs to the RimM family. As to quaternary structure, binds ribosomal protein uS19.

The protein localises to the cytoplasm. An accessory protein needed during the final step in the assembly of 30S ribosomal subunit, possibly for assembly of the head region. Essential for efficient processing of 16S rRNA. May be needed both before and after RbfA during the maturation of 16S rRNA. It has affinity for free ribosomal 30S subunits but not for 70S ribosomes. The sequence is that of Ribosome maturation factor RimM from Staphylococcus aureus (strain MRSA252).